Here is a 330-residue protein sequence, read N- to C-terminus: Protein pelota homolog (330 aa).

The protein belongs to the eukaryotic release factor 1 family. Pelota subfamily. In terms of assembly, monomer. Requires a divalent metal cation as cofactor.

The protein localises to the cytoplasm. Its function is as follows. May function in recognizing stalled ribosomes, interact with stem-loop structures in stalled mRNA molecules, and effect endonucleolytic cleavage of the mRNA. May play a role in the release non-functional ribosomes and degradation of damaged mRNAs. Has endoribonuclease activity. The sequence is that of Protein pelota homolog from Pyrobaculum neutrophilum (strain DSM 2338 / JCM 9278 / NBRC 100436 / V24Sta) (Thermoproteus neutrophilus).